The chain runs to 274 residues: MPFLHLFTPYTNADNTKLILRVNESRLRLFTRQLLAEFFGTLFVVYIVSGSTLAANFAVSDPIVRVCLICLVQGFAFAAIIWSISGISGCQLNPAVTVGCVTTGRMGILNGIAFIIFQCVGALVGAGMMKASLPTFYERDLSATTLATGVNVARGFFLEMVTTSFLVFVVLGVAVYNEWDPKISRVAPLAIGCAVIAGVGFLNLFTGGSLNPARSFGPAVFSDTWHRHYIYWFGPICGGIIAGLFWRIFLSEKVLLIDRPYTDFHRSTYGTATK.

Topologically, residues 1-33 (MPFLHLFTPYTNADNTKLILRVNESRLRLFTRQ) are cytoplasmic. Residues 34–54 (LLAEFFGTLFVVYIVSGSTLA) form a helical membrane-spanning segment. Over 55–66 (ANFAVSDPIVRV) the chain is Extracellular. The chain crosses the membrane as a helical span at residues 67–87 (CLICLVQGFAFAAIIWSISGI). At 88 to 105 (SGCQLNPAVTVGCVTTGR) the chain is on the cytoplasmic side. An NPA 1 motif is present at residues 93 to 95 (NPA). Residues 106–126 (MGILNGIAFIIFQCVGALVGA) traverse the membrane as a helical segment. At 127-154 (GMMKASLPTFYERDLSATTLATGVNVAR) the chain is on the extracellular side. Residues 155-175 (GFFLEMVTTSFLVFVVLGVAV) traverse the membrane as a helical segment. Over 176-185 (YNEWDPKISR) the chain is Cytoplasmic. A helical transmembrane segment spans residues 186-206 (VAPLAIGCAVIAGVGFLNLFT). Over 207–229 (GGSLNPARSFGPAVFSDTWHRHY) the chain is Extracellular. The NPA 2 motif lies at 211 to 213 (NPA). The helical transmembrane segment at 230–250 (IYWFGPICGGIIAGLFWRIFL) threads the bilayer. Residues 251 to 274 (SEKVLLIDRPYTDFHRSTYGTATK) are Cytoplasmic-facing.

The protein belongs to the MIP/aquaporin (TC 1.A.8) family.

The protein resides in the cell membrane. Functionally, may form a water-specific channel. The protein is Aquaporin C (wacA) of Dictyostelium discoideum (Social amoeba).